Consider the following 506-residue polypeptide: Nostrin (506 aa).

One can recognise an F-BAR domain in the interval Met-1 to Asp-260. At Ser-114 the chain carries Phosphoserine. 2 coiled-coil regions span residues Ser-160–Tyr-230 and Lys-305–Ser-334. Positions Pro-292 to Asp-372 constitute an REM-1 domain. Residues Lys-413–Val-435 form a disordered region. Positions Pro-419 to Val-435 are enriched in low complexity. The region spanning Ala-438–Pro-497 is the SH3 domain. A Phosphoserine modification is found at Ser-479.

Homotrimer. Interacts with NOS3, DNM2, WASL and CAV1. Interacts with DAB2. Interacts (via SH3 domain) with DNM2; this interaction allows the recruitment of NOS3 to dynamin-positive structures.

It is found in the cell membrane. It localises to the cytoplasmic vesicle. The protein resides in the cytoplasm. The protein localises to the cytoskeleton. Its subcellular location is the nucleus. Multivalent adapter protein which may decrease NOS3 activity by inducing its translocation away from the plasma membrane. The sequence is that of Nostrin from Mus musculus (Mouse).